A 683-amino-acid chain; its full sequence is Acetyl-coenzyme A synthetase 2 (683 aa).

CoA-binding positions include 207–210 (RGGK) and Thr326. Residues 402–404 (GEP), 426–431 (DTFWQT), Asp517, and Arg532 contribute to the ATP site. Ser540 is a CoA binding site. An ATP-binding site is contributed by Arg543. Arg613 contributes to the CoA binding site.

The protein belongs to the ATP-dependent AMP-binding enzyme family.

The enzyme catalyses acetate + ATP + CoA = acetyl-CoA + AMP + diphosphate. In Candida glabrata (strain ATCC 2001 / BCRC 20586 / JCM 3761 / NBRC 0622 / NRRL Y-65 / CBS 138) (Yeast), this protein is Acetyl-coenzyme A synthetase 2 (ACS2).